The sequence spans 1485 residues: Chromosome partition protein MukB (1485 aa).

Position 34–41 (34–41 (GGNGAGKS)) interacts with ATP. 2 coiled-coil regions span residues 311 to 480 (EMAR…EAYR) and 519 to 665 (GARL…RLSQ). The tract at residues 666–783 (PGGAEDARLI…SLPLFGRAAR (118 aa)) is flexible hinge. Coiled coils occupy residues 832–1115 (NDPE…QAKA) and 1209–1265 (IDAI…LQSV).

It belongs to the SMC family. MukB subfamily. In terms of assembly, homodimerization via its hinge domain. Binds to DNA via its C-terminal region. Interacts, and probably forms a ternary complex, with MukE and MukF via its C-terminal region. The complex formation is stimulated by calcium or magnesium. Interacts with tubulin-related protein FtsZ.

It localises to the cytoplasm. Its subcellular location is the nucleoid. In terms of biological role, plays a central role in chromosome condensation, segregation and cell cycle progression. Functions as a homodimer, which is essential for chromosome partition. Involved in negative DNA supercoiling in vivo, and by this means organize and compact chromosomes. May achieve or facilitate chromosome segregation by condensation DNA from both sides of a centrally located replisome during cell division. The sequence is that of Chromosome partition protein MukB from Edwardsiella ictaluri (strain 93-146).